Consider the following 282-residue polypeptide: Endo-1,4-beta-xylanase B (282 aa).

Positions 1 to 39 (MGISSILLSALIAGGALALPAAEPVSFDIRDENITLARR) are cleaved as a signal peptide. Asn33 carries an N-linked (GlcNAc...) asparagine glycan. Positions 40–219 (AEAINYNQDY…GSGSGQISLS (180 aa)) constitute a GH11 domain. The active-site Nucleophile is the Glu117. Glu206 serves as the catalytic Proton donor. The tract at residues 214-245 (GQISLSKGTGGGSTTTTPTGPTSTSTAPSSGG) is disordered. The span at 227–243 (TTTTPTGPTSTSTAPSS) shows a compositional bias: low complexity. Residues 246–282 (TGAAQWGQCGGIGWTGPTTCVAPYTCKYENAYYSQCQ) form the CBM1 domain.

The protein belongs to the glycosyl hydrolase 11 (cellulase G) family.

Its subcellular location is the secreted. It catalyses the reaction Endohydrolysis of (1-&gt;4)-beta-D-xylosidic linkages in xylans.. Its pathway is glycan degradation; xylan degradation. With respect to regulation, significantly inhibited by the wheat xylanase inhibiting protein I (XIP-I) and the proteinaceous endoxylanase Triticum aestivum xylanase inhibitors I (TAXI-I), but not TAXI-II. In terms of biological role, endo-1,4-beta-xylanase involved in the hydrolysis of xylan, a major structural heterogeneous polysaccharide found in plant biomass representing the second most abundant polysaccharide in the biosphere, after cellulose. In Talaromyces funiculosus (Fruitlet core rot fungus), this protein is Endo-1,4-beta-xylanase B (xynB).